The following is a 220-amino-acid chain: Ribose-5-phosphate isomerase A (220 aa).

Substrate-binding positions include threonine 28 to threonine 31, aspartate 81 to aspartate 84, and lysine 94 to glycine 97. The active-site Proton acceptor is the glutamate 103. Lysine 121 is a substrate binding site.

It belongs to the ribose 5-phosphate isomerase family. As to quaternary structure, homodimer.

The enzyme catalyses aldehydo-D-ribose 5-phosphate = D-ribulose 5-phosphate. It participates in carbohydrate degradation; pentose phosphate pathway; D-ribose 5-phosphate from D-ribulose 5-phosphate (non-oxidative stage): step 1/1. Catalyzes the reversible conversion of ribose-5-phosphate to ribulose 5-phosphate. In Coxiella burnetii (strain CbuK_Q154) (Coxiella burnetii (strain Q154)), this protein is Ribose-5-phosphate isomerase A.